Here is a 426-residue protein sequence, read N- to C-terminus: 3-phosphoshikimate 1-carboxyvinyltransferase (426 aa).

3-phosphoshikimate contacts are provided by lysine 22, serine 23, and arginine 27. A phosphoenolpyruvate-binding site is contributed by lysine 22. The phosphoenolpyruvate site is built by glycine 96 and arginine 124. Positions 170, 171, 172, 198, 314, 337, and 341 each coordinate 3-phosphoshikimate. Glutamine 172 provides a ligand contact to phosphoenolpyruvate. Residue aspartate 314 is the Proton acceptor of the active site. Phosphoenolpyruvate is bound by residues arginine 345, arginine 387, and lysine 412.

It belongs to the EPSP synthase family. Monomer.

It is found in the cytoplasm. It carries out the reaction 3-phosphoshikimate + phosphoenolpyruvate = 5-O-(1-carboxyvinyl)-3-phosphoshikimate + phosphate. It participates in metabolic intermediate biosynthesis; chorismate biosynthesis; chorismate from D-erythrose 4-phosphate and phosphoenolpyruvate: step 6/7. Its function is as follows. Catalyzes the transfer of the enolpyruvyl moiety of phosphoenolpyruvate (PEP) to the 5-hydroxyl of shikimate-3-phosphate (S3P) to produce enolpyruvyl shikimate-3-phosphate and inorganic phosphate. The protein is 3-phosphoshikimate 1-carboxyvinyltransferase of Shewanella baltica (strain OS155 / ATCC BAA-1091).